We begin with the raw amino-acid sequence, 371 residues long: Aspartate-semialdehyde dehydrogenase (371 aa).

NADP(+) is bound by residues 9-12, 37-38, and Gln-73; these read RGMV and TS. Arg-102 is a phosphate binding site. Residue Cys-135 is the Acyl-thioester intermediate of the active site. Gln-162 contributes to the substrate binding site. NADP(+) is bound by residues 165 to 166 and Pro-193; that span reads SG. Glu-241 lines the substrate pocket. Lys-244 is a binding site for phosphate. Arg-268 provides a ligand contact to substrate. His-275 acts as the Proton acceptor in catalysis. Gln-351 is an NADP(+) binding site.

This sequence belongs to the aspartate-semialdehyde dehydrogenase family. In terms of assembly, homodimer.

It carries out the reaction L-aspartate 4-semialdehyde + phosphate + NADP(+) = 4-phospho-L-aspartate + NADPH + H(+). Its pathway is amino-acid biosynthesis; L-lysine biosynthesis via DAP pathway; (S)-tetrahydrodipicolinate from L-aspartate: step 2/4. The protein operates within amino-acid biosynthesis; L-methionine biosynthesis via de novo pathway; L-homoserine from L-aspartate: step 2/3. It participates in amino-acid biosynthesis; L-threonine biosynthesis; L-threonine from L-aspartate: step 2/5. Functionally, catalyzes the NADPH-dependent formation of L-aspartate-semialdehyde (L-ASA) by the reductive dephosphorylation of L-aspartyl-4-phosphate. In Neisseria meningitidis serogroup A / serotype 4A (strain DSM 15465 / Z2491), this protein is Aspartate-semialdehyde dehydrogenase.